Reading from the N-terminus, the 234-residue chain is Large ribosomal subunit protein bL25 (234 aa).

Residues 1–24 (MATVMELKATARPKSGKGAARAER) form a disordered region.

The protein belongs to the bacterial ribosomal protein bL25 family. CTC subfamily. In terms of assembly, part of the 50S ribosomal subunit; part of the 5S rRNA/L5/L18/L25 subcomplex. Contacts the 5S rRNA. Binds to the 5S rRNA independently of L5 and L18.

Its function is as follows. This is one of the proteins that binds to the 5S RNA in the ribosome where it forms part of the central protuberance. This chain is Large ribosomal subunit protein bL25, found in Rhodopseudomonas palustris (strain BisB5).